The sequence spans 134 residues: MLWQAYVDDHLMCDIEGHEGHRLTAAAIVGHDGSVWAQSATFPQFKPEEMNGIMTDFNEPGHLAPTGLHLGGTKYMVIQGEAGAVIRGKKGSGGITIKKTGQALVFGIYEEPVTPGQCNMVVERLGDYLLEQGL.

A disulfide bridge links Cys-13 with Cys-118. The short motif at 84–100 is the Involved in PIP2 interaction element; sequence AVIRGKKGSGGITIKKT. Thr-114 is modified (phosphothreonine).

The protein belongs to the profilin family. In terms of processing, phosphorylated by MAP kinases.

Its subcellular location is the cytoplasm. The protein resides in the cytoskeleton. The chain is Profilin-2 from Olea europaea (Common olive).